Consider the following 169-residue polypeptide: Large ribosomal subunit protein uL10 (169 aa).

This sequence belongs to the universal ribosomal protein uL10 family. Part of the ribosomal stalk of the 50S ribosomal subunit. The N-terminus interacts with L11 and the large rRNA to form the base of the stalk. The C-terminus forms an elongated spine to which L12 dimers bind in a sequential fashion forming a multimeric L10(L12)X complex.

In terms of biological role, forms part of the ribosomal stalk, playing a central role in the interaction of the ribosome with GTP-bound translation factors. In Deinococcus geothermalis (strain DSM 11300 / CIP 105573 / AG-3a), this protein is Large ribosomal subunit protein uL10.